An 854-amino-acid polypeptide reads, in one-letter code: Iron and copper transporter IacT (854 aa).

Positions 187–194 (IELIVTAQ) match the TonB box motif. Residues 199-315 (DAQDVPLSLT…PAGVVNVISR (117 aa)) enclose the TBDR plug domain. In terms of domain architecture, TBDR beta-barrel spans 320–854 (QPEMRISALY…TYGVRVSASF (535 aa)). A TonB C-terminal box motif is present at residues 839 to 854 (GFGDPVTYGVRVSASF).

This sequence belongs to the TonB-dependent receptor family.

The protein localises to the cell outer membrane. Functionally, involved in the TonB-dependent uptake of copper and iron under conditions in which the concentration of copper exceeds that of the iron. The polypeptide is Iron and copper transporter IacT (Nostoc sp. (strain PCC 7120 / SAG 25.82 / UTEX 2576)).